The chain runs to 181 residues: I-Kappa-B like protein C2 (181 aa).

3 ANK repeats span residues aspartate 54–serine 86, aspartate 91–isoleucine 121, and alanine 125–valine 154.

This sequence belongs to the polydnaviridae I-Kappa-B-like protein family.

Suppresses the host immune response through NF-kappa-B inactivation. Possesses ankyrin repeat domains required for NF-kappa-B binding but lacks the regulatory regions required for dissociation from NF-kappa-B and degradation. Therefore, prevents host NF-kappa-B release and subsequent activation. The sequence is that of I-Kappa-B like protein C2 (C2) from Microplitis demolitor (Parasitoid wasp).